Consider the following 555-residue polypeptide: MADGCGTGKEPPYPGAAAALRRWEQLRRRAAAPWARGLLAVAAGLGLFYAALRVPLRLRDGLAAVTVFLSTLTPKFYFALTVTSSFISGLIFVFEWWHFRKYGTSFIEQVSVSHLRPLIGGVENSPPAPAAFSAGENEANRQNMPECKMWRNPLNLFRGAEYSRYMWVTGKEPLTYYDMNLSAQDHQNFFTCDTDALRPSDTVMQKAWRERNPQARIKAAYQALELNNDCATAYVLLAEEEATTIVDAERYFKQALKAGEMIYRKSQNCHSQSPQHEAQLRRDTNVLVYVKRRLAMCARKLGRIRESVKMMRDLMKEFPLLSMLNIHENLLEALLELQAYADVQAVLAKYDDISLPKSAAICYTAALLKARAVSERFSPETAFKRGLSTAEINAVEAIHRAVEFNPHVPKYLLEMKSLVLPPEHILKRGDSEAVAYAFFHLQHWKRIEGALHLLHCTWEGTFRMIPYPLEKGHLFYPYPSCTETADRELLPTFHEVSVYPQKELPFFIHFTAGLCSFSAMLALLTHQFPELMVVFAKAVLRVLWPVSAPSVLASG.

4 consecutive transmembrane segments (helical) span residues 32-52 (APWA…YAAL), 76-96 (FYFA…VFEW), 504-524 (LPFF…LALL), and 531-551 (LMVV…APSV).

The protein belongs to the ST7 family.

Its subcellular location is the membrane. This Gallus gallus (Chicken) protein is Suppressor of tumorigenicity 7 protein-like (ST7L).